The sequence spans 482 residues: Peptide chain release factor PrfB2, chloroplastic (482 aa).

The N-terminal 21 residues, 1 to 21, are a transit peptide targeting the chloroplast; the sequence is MLSLIIRRSRSRFIIHGIKIS.

Belongs to the prokaryotic/mitochondrial release factor family.

The protein localises to the plastid. Its subcellular location is the chloroplast stroma. In terms of biological role, directs the termination of translation in response to the peptide chain termination codon UGA. Required for the proper translation, stability and normal processing of UGA-containing polycistronic transcripts in chloroplasts. This chain is Peptide chain release factor PrfB2, chloroplastic, found in Arabidopsis thaliana (Mouse-ear cress).